The sequence spans 253 residues: Ribosomal RNA small subunit methyltransferase A (253 aa).

The S-adenosyl-L-methionine site is built by His-12, Leu-14, Gly-39, Glu-60, Asp-81, and Asn-104.

The protein belongs to the class I-like SAM-binding methyltransferase superfamily. rRNA adenine N(6)-methyltransferase family. RsmA subfamily.

The protein resides in the cytoplasm. It catalyses the reaction adenosine(1518)/adenosine(1519) in 16S rRNA + 4 S-adenosyl-L-methionine = N(6)-dimethyladenosine(1518)/N(6)-dimethyladenosine(1519) in 16S rRNA + 4 S-adenosyl-L-homocysteine + 4 H(+). In terms of biological role, specifically dimethylates two adjacent adenosines (A1518 and A1519) in the loop of a conserved hairpin near the 3'-end of 16S rRNA in the 30S particle. May play a critical role in biogenesis of 30S subunits. This Paracidovorax citrulli (strain AAC00-1) (Acidovorax citrulli) protein is Ribosomal RNA small subunit methyltransferase A.